A 514-amino-acid polypeptide reads, in one-letter code: Type-2 serine--tRNA ligase (514 aa).

An L-serine-binding site is contributed by A313. C315 lines the Zn(2+) pocket. R344 provides a ligand contact to L-serine. Residues 344–346 (RWE) and 355–356 (RV) contribute to the ATP site. 361–363 (RGE) serves as a coordination point for L-serine. The Zn(2+) site is built by E363 and C470. R477 contributes to the ATP binding site.

Belongs to the class-II aminoacyl-tRNA synthetase family. Type-2 seryl-tRNA synthetase subfamily. As to quaternary structure, homodimer. Requires Zn(2+) as cofactor.

The protein resides in the cytoplasm. It carries out the reaction tRNA(Ser) + L-serine + ATP = L-seryl-tRNA(Ser) + AMP + diphosphate + H(+). The catalysed reaction is tRNA(Sec) + L-serine + ATP = L-seryl-tRNA(Sec) + AMP + diphosphate + H(+). It functions in the pathway aminoacyl-tRNA biosynthesis; selenocysteinyl-tRNA(Sec) biosynthesis; L-seryl-tRNA(Sec) from L-serine and tRNA(Sec): step 1/1. Catalyzes the attachment of serine to tRNA(Ser). Is also able to aminoacylate tRNA(Sec) with serine, to form the misacylated tRNA L-seryl-tRNA(Sec), which will be further converted into selenocysteinyl-tRNA(Sec). This chain is Type-2 serine--tRNA ligase, found in Methanococcus maripaludis (strain C7 / ATCC BAA-1331).